A 338-amino-acid polypeptide reads, in one-letter code: Ferrochelatase (338 aa).

Fe cation-binding residues include histidine 189 and glutamate 294.

This sequence belongs to the ferrochelatase family.

The protein resides in the cytoplasm. It catalyses the reaction heme b + 2 H(+) = protoporphyrin IX + Fe(2+). It participates in porphyrin-containing compound metabolism; protoheme biosynthesis; protoheme from protoporphyrin-IX: step 1/1. In terms of biological role, catalyzes the ferrous insertion into protoporphyrin IX. This is Ferrochelatase from Pseudomonas putida (strain ATCC 700007 / DSM 6899 / JCM 31910 / BCRC 17059 / LMG 24140 / F1).